Reading from the N-terminus, the 183-residue chain is Peptidyl-tRNA hydrolase (183 aa).

Y15 is a binding site for tRNA. H20 (proton acceptor) is an active-site residue. Residues Y67 and N69 each coordinate tRNA.

This sequence belongs to the PTH family. In terms of assembly, monomer.

The protein resides in the cytoplasm. It catalyses the reaction an N-acyl-L-alpha-aminoacyl-tRNA + H2O = an N-acyl-L-amino acid + a tRNA + H(+). Its function is as follows. Hydrolyzes ribosome-free peptidyl-tRNAs (with 1 or more amino acids incorporated), which drop off the ribosome during protein synthesis, or as a result of ribosome stalling. Catalyzes the release of premature peptidyl moieties from peptidyl-tRNA molecules trapped in stalled 50S ribosomal subunits, and thus maintains levels of free tRNAs and 50S ribosomes. In Chlamydia abortus (strain DSM 27085 / S26/3) (Chlamydophila abortus), this protein is Peptidyl-tRNA hydrolase.